The following is a 354-amino-acid chain: Uroporphyrinogen decarboxylase (354 aa).

Substrate is bound by residues 27-31 (RQAGR), aspartate 77, tyrosine 154, threonine 209, and histidine 327.

Belongs to the uroporphyrinogen decarboxylase family. As to quaternary structure, homodimer.

It localises to the cytoplasm. It carries out the reaction uroporphyrinogen III + 4 H(+) = coproporphyrinogen III + 4 CO2. Its pathway is porphyrin-containing compound metabolism; protoporphyrin-IX biosynthesis; coproporphyrinogen-III from 5-aminolevulinate: step 4/4. Functionally, catalyzes the decarboxylation of four acetate groups of uroporphyrinogen-III to yield coproporphyrinogen-III. This Salmonella agona (strain SL483) protein is Uroporphyrinogen decarboxylase.